The following is a 698-amino-acid chain: Polyribonucleotide nucleotidyltransferase (698 aa).

Mg(2+) contacts are provided by Asp485 and Asp491. Residues Pro552–Ile611 form the KH domain. Residues Gly621–Lys689 enclose the S1 motif domain.

The protein belongs to the polyribonucleotide nucleotidyltransferase family. In terms of assembly, component of the RNA degradosome, which is a multiprotein complex involved in RNA processing and mRNA degradation. It depends on Mg(2+) as a cofactor.

The protein localises to the cytoplasm. It catalyses the reaction RNA(n+1) + phosphate = RNA(n) + a ribonucleoside 5'-diphosphate. Functionally, involved in mRNA degradation. Catalyzes the phosphorolysis of single-stranded polyribonucleotides processively in the 3'- to 5'-direction. This Psychromonas ingrahamii (strain DSM 17664 / CCUG 51855 / 37) protein is Polyribonucleotide nucleotidyltransferase.